Here is a 145-residue protein sequence, read N- to C-terminus: Bacilliredoxin BH2759 (145 aa).

This sequence belongs to the bacilliredoxin family.

The protein is Bacilliredoxin BH2759 of Halalkalibacterium halodurans (strain ATCC BAA-125 / DSM 18197 / FERM 7344 / JCM 9153 / C-125) (Bacillus halodurans).